We begin with the raw amino-acid sequence, 150 residues long: Deoxyuridine 5'-triphosphate nucleotidohydrolase (150 aa).

Substrate contacts are provided by residues 69–71, Asn82, 86–88, and Met96; these read RSG and LID.

The protein belongs to the dUTPase family. The cofactor is Mg(2+).

It catalyses the reaction dUTP + H2O = dUMP + diphosphate + H(+). It participates in pyrimidine metabolism; dUMP biosynthesis; dUMP from dCTP (dUTP route): step 2/2. This enzyme is involved in nucleotide metabolism: it produces dUMP, the immediate precursor of thymidine nucleotides and it decreases the intracellular concentration of dUTP so that uracil cannot be incorporated into DNA. The protein is Deoxyuridine 5'-triphosphate nucleotidohydrolase of Leptothrix cholodnii (strain ATCC 51168 / LMG 8142 / SP-6) (Leptothrix discophora (strain SP-6)).